The chain runs to 163 residues: Nucleotide-binding protein YajQ (163 aa).

It belongs to the YajQ family.

In terms of biological role, nucleotide-binding protein. This chain is Nucleotide-binding protein YajQ, found in Escherichia coli O81 (strain ED1a).